Consider the following 366-residue polypeptide: Autoinducer 2-binding periplasmic protein LuxP (366 aa).

A signal peptide spans 1–13 (MKKILLTCLLASA).

It belongs to the bacterial solute-binding protein 2 family.

It localises to the periplasm. Binds to an autoinducer molecule. This complex then interacts with the LuxQ sensor protein. The sequence is that of Autoinducer 2-binding periplasmic protein LuxP (luxP) from Vibrio vulnificus (strain CMCP6).